Consider the following 495-residue polypeptide: Probable polyamine transporter At1g31830 (495 aa).

The next 11 membrane-spanning stretches (helical) occupy residues 49–69, 79–99, 112–132, 156–176, 186–206, 230–250, 267–287, 357–377, 380–400, 417–437, and 442–462; these read VSML…PFGV, LLAL…EALI, GYVV…QGWM, VPAL…TILL, IVGW…AVMG, LYLN…TLAG, VILV…AIPL, TPLL…WLSF, IVAA…IAFV, IGTT…CAVV, and LKVA…HPLL.

This sequence belongs to the amino acid-polyamine-organocation (APC) superfamily. Polyamine:cation symporter (PHS) (TC 2.A.3.12) family.

The protein localises to the cell membrane. Its function is as follows. Probable cell membrane polyamine/proton symporter involved in the polyamine uptake in cells. The chain is Probable polyamine transporter At1g31830 from Arabidopsis thaliana (Mouse-ear cress).